The sequence spans 229 residues: Cytochrome c oxidase subunit 2 (229 aa).

The Mitochondrial intermembrane portion of the chain corresponds to 1–26; it reads MSTWANLGLQDSASPLMEQLIFFHDH. The helical transmembrane segment at 27-48 threads the bilayer; it reads ALLILVMITVLVGYLMFMLFFN. Residues 49-62 lie on the Mitochondrial matrix side of the membrane; the sequence is SYVNRFLLHGQLIE. Residues 63 to 82 form a helical membrane-spanning segment; it reads MIWTILPAIILLFIAMPSLR. At 83–229 the chain is on the mitochondrial intermembrane side; that stretch reads LLYLLDEINE…IKWISNSVNS (147 aa). Cu cation is bound by residues H161, C196, E198, C200, H204, and M207. Position 198 (E198) interacts with Mg(2+).

It belongs to the cytochrome c oxidase subunit 2 family. Component of the cytochrome c oxidase (complex IV, CIV), a multisubunit enzyme composed of a catalytic core of 3 subunits and several supernumerary subunits. The complex exists as a monomer or a dimer and forms supercomplexes (SCs) in the inner mitochondrial membrane with ubiquinol-cytochrome c oxidoreductase (cytochrome b-c1 complex, complex III, CIII). Requires Cu cation as cofactor.

It localises to the mitochondrion inner membrane. It catalyses the reaction 4 Fe(II)-[cytochrome c] + O2 + 8 H(+)(in) = 4 Fe(III)-[cytochrome c] + 2 H2O + 4 H(+)(out). Component of the cytochrome c oxidase, the last enzyme in the mitochondrial electron transport chain which drives oxidative phosphorylation. The respiratory chain contains 3 multisubunit complexes succinate dehydrogenase (complex II, CII), ubiquinol-cytochrome c oxidoreductase (cytochrome b-c1 complex, complex III, CIII) and cytochrome c oxidase (complex IV, CIV), that cooperate to transfer electrons derived from NADH and succinate to molecular oxygen, creating an electrochemical gradient over the inner membrane that drives transmembrane transport and the ATP synthase. Cytochrome c oxidase is the component of the respiratory chain that catalyzes the reduction of oxygen to water. Electrons originating from reduced cytochrome c in the intermembrane space (IMS) are transferred via the dinuclear copper A center (CU(A)) of subunit 2 and heme A of subunit 1 to the active site in subunit 1, a binuclear center (BNC) formed by heme A3 and copper B (CU(B)). The BNC reduces molecular oxygen to 2 water molecules using 4 electrons from cytochrome c in the IMS and 4 protons from the mitochondrial matrix. The polypeptide is Cytochrome c oxidase subunit 2 (mt:CoII) (Drosophila miranda (Fruit fly)).